A 286-amino-acid polypeptide reads, in one-letter code: 4-hydroxybenzoate octaprenyltransferase (286 aa).

Helical transmembrane passes span 19–39 (AGWL…SHGF), 42–62 (WHLL…GCCV), 92–112 (ALVL…TTNA), 115–135 (IAWS…KRYV), 137–157 (MPQA…FAAV), 161–181 (VPLL…AYDT), 206–226 (FDVA…ALAL), 233–253 (AIYW…GWLI), and 264–284 (AFRL…LSYL).

It belongs to the UbiA prenyltransferase family. Requires Mg(2+) as cofactor.

It is found in the cell inner membrane. The catalysed reaction is all-trans-octaprenyl diphosphate + 4-hydroxybenzoate = 4-hydroxy-3-(all-trans-octaprenyl)benzoate + diphosphate. It functions in the pathway cofactor biosynthesis; ubiquinone biosynthesis. Functionally, catalyzes the prenylation of para-hydroxybenzoate (PHB) with an all-trans polyprenyl group. Mediates the second step in the final reaction sequence of ubiquinone-8 (UQ-8) biosynthesis, which is the condensation of the polyisoprenoid side chain with PHB, generating the first membrane-bound Q intermediate 3-octaprenyl-4-hydroxybenzoate. In Polaromonas sp. (strain JS666 / ATCC BAA-500), this protein is 4-hydroxybenzoate octaprenyltransferase.